Reading from the N-terminus, the 367-residue chain is MEVKSAKELKRISKELQENFLNRWKLLNLEQDKDRLKSLTEKAEDPNLWNNPEEARLVSQKKNELEKKLNPWFTIQQDILDFPDLVDLTLDEKGENGVGELSSEYNRLQEKFEELELLGALKNPEDLKPAFLNIHPGAGGTESQDWAEMLLRMYTRYFEKKGYQYSLIDVQAGDGAGIKNATLHVIGDFAFGFLKGENGVHRLVRISPFDANKRRHTSFVSVHVSPEIDDDIDIKIEEKDIRVDVYRSSGAGGQHVNTTDSAVRITHMPSGIVVACQNERSQIKNRDTAFKMLKARLYELEQEKAKEELEKKSGEKKDIAWGSQIRSYVFHPYNLVKDHRTDHETGNVAAVMDGDIEPFILAYLKTL.

Gln254 is modified (N5-methylglutamine).

Belongs to the prokaryotic/mitochondrial release factor family. Post-translationally, methylated by PrmC. Methylation increases the termination efficiency of RF2.

Its subcellular location is the cytoplasm. Peptide chain release factor 2 directs the termination of translation in response to the peptide chain termination codons UGA and UAA. The chain is Peptide chain release factor 2 from Leptospira interrogans serogroup Icterohaemorrhagiae serovar Lai (strain 56601).